Reading from the N-terminus, the 264-residue chain is Probable metallo-hydrolase YflN (264 aa).

Zn(2+)-binding residues include His-80, His-82, Asp-84, His-85, His-169, Asp-188, and His-241.

Belongs to the metallo-beta-lactamase superfamily. Zn(2+) is required as a cofactor.

The protein is Probable metallo-hydrolase YflN (yflN) of Bacillus subtilis (strain 168).